The sequence spans 379 residues: MSIFFKPPIDIEILFDNEESRKHVDIATRSSNSSYKSMKESLPVYEDGESLGGIVTLRVRDSKKVDHLGIKVSVIGSIDMLKSHGSGNSSSKKVTSSTSSSSSNGSVDVRKNSVDQFLCQSYDLCPAGELQHSQSFPFLFRDLSKRYESYKGKNVDVAYYVKVTVMRKSTDISKIKRFWVYLYNSVTTAPNTLSANETKATTNDIAGGNYAADNASDNTQTKSTQGEAADVNQVLPISHSNNEPKPVRLDIGIENCLHIEFEYAKSQYSLKEVIVGRIYFLLTRLRIKHMELSLITRESSGLQTSNVMTDSTAIRYEIMDGSSVKGETIPIRLFLSGYDLTPNMSCNYFNVKNYLSLVIIDEDGRRYFKQSEITLYRTR.

Residues 84 to 107 (HGSGNSSSKKVTSSTSSSSSNGSV) show a composition bias toward low complexity. Residues 84–108 (HGSGNSSSKKVTSSTSSSSSNGSVD) form a disordered region. Serine 216 bears the Phosphoserine mark.

The protein belongs to the VPS26 family. In terms of assembly, component of the retromer complex which consists of VPS29, VPS26, VPS35, VPS5 and VPS17. Component of a retromer subcomplex consisting of VPS29, VPS26 and VPS35.

Plays a role in vesicular protein sorting. Required for the endosome-to-Golgi retrieval of the vacuolar protein sorting receptor VPS10. Component of the membrane-associated retromer complex which is essential in endosome-to-Golgi retrograde transport. The VPS29-VPS26-VPS35 subcomplex may be involved in cargo selection. This Saccharomyces cerevisiae (strain ATCC 204508 / S288c) (Baker's yeast) protein is Carboxypeptidase Y-deficient protein 8 (PEP8).